The sequence spans 190 residues: Xanthine phosphoribosyltransferase (190 aa).

2 residues coordinate xanthine: Leu20 and Asn27. A 5-phospho-alpha-D-ribose 1-diphosphate-binding site is contributed by 128–132 (ANGKA). Lys156 serves as a coordination point for xanthine.

The protein belongs to the purine/pyrimidine phosphoribosyltransferase family. Xpt subfamily. In terms of assembly, homodimer.

Its subcellular location is the cytoplasm. It catalyses the reaction XMP + diphosphate = xanthine + 5-phospho-alpha-D-ribose 1-diphosphate. The protein operates within purine metabolism; XMP biosynthesis via salvage pathway; XMP from xanthine: step 1/1. Its function is as follows. Converts the preformed base xanthine, a product of nucleic acid breakdown, to xanthosine 5'-monophosphate (XMP), so it can be reused for RNA or DNA synthesis. In Ruminiclostridium cellulolyticum (strain ATCC 35319 / DSM 5812 / JCM 6584 / H10) (Clostridium cellulolyticum), this protein is Xanthine phosphoribosyltransferase.